Reading from the N-terminus, the 93-residue chain is Small ribosomal subunit protein uS19 (93 aa).

Belongs to the universal ribosomal protein uS19 family.

Its function is as follows. Protein S19 forms a complex with S13 that binds strongly to the 16S ribosomal RNA. The polypeptide is Small ribosomal subunit protein uS19 (Blochmanniella floridana).